We begin with the raw amino-acid sequence, 713 residues long: Mitochondrial intermediate peptidase (713 aa).

The transit peptide at 1 to 35 (MLCVGRLGGLGARAAALPPRRAGRGILEAGIRARR) directs the protein to the mitochondrion. K126 carries the post-translational modification N6-acetyllysine. Residue H495 participates in Zn(2+) binding. The active site involves E496. Residues H499 and H502 each coordinate Zn(2+).

The protein belongs to the peptidase M3 family. Monomer. It depends on Zn(2+) as a cofactor.

It is found in the mitochondrion matrix. The catalysed reaction is Release of an N-terminal octapeptide as second stage of processing of some proteins imported into the mitochondrion.. Activity is divalent cation-dependent. It is stimulated by manganese, magnesium or calcium ions and reversibly inhibited by zinc, cobalt and iron. Cleaves proteins, imported into the mitochondrion, to their mature size. This chain is Mitochondrial intermediate peptidase (MIPEP), found in Pongo abelii (Sumatran orangutan).